Reading from the N-terminus, the 329-residue chain is Malate dehydrogenase (329 aa).

12–18 is an NAD(+) binding site; the sequence is GAAGQIG. Substrate-binding residues include R93 and R99. NAD(+) contacts are provided by residues N106, Q113, and 130 to 132; that span reads VGN. Positions 132 and 163 each coordinate substrate. H188 serves as the catalytic Proton acceptor.

This sequence belongs to the LDH/MDH superfamily. MDH type 2 family.

The catalysed reaction is (S)-malate + NAD(+) = oxaloacetate + NADH + H(+). Its function is as follows. Catalyzes the reversible oxidation of malate to oxaloacetate. This Streptomyces griseus subsp. griseus (strain JCM 4626 / CBS 651.72 / NBRC 13350 / KCC S-0626 / ISP 5235) protein is Malate dehydrogenase.